Reading from the N-terminus, the 338-residue chain is Malate dehydrogenase, mitochondrial (338 aa).

The transit peptide at 1–24 (MLSALARPAGAALRRSFSTSAQNN) directs the protein to the mitochondrion. Residues 31 to 37 (GASGGIG) and aspartate 57 contribute to the NAD(+) site. O-linked (GalNAc...) serine glycosylation is present at serine 33. N6-acetyllysine; alternate occurs at positions 78 and 91. N6-succinyllysine; alternate occurs at positions 78 and 91. Substrate-binding residues include arginine 104 and arginine 110. NAD(+) is bound by residues asparagine 117 and 140–142 (ISN). Position 142 (asparagine 142) interacts with substrate. Lysine 165 bears the N6-acetyllysine mark. Aspartate 173 (proton relay) is an active-site residue. Arginine 176 lines the substrate pocket. Position 185 is an N6-acetyllysine; alternate (lysine 185). At lysine 185 the chain carries N6-succinyllysine; alternate. Residue histidine 200 is the Proton acceptor of the active site. N6-succinyllysine is present on lysine 203. N6-acetyllysine; alternate occurs at positions 215 and 239. N6-succinyllysine; alternate occurs at positions 215 and 239. Lysine 239 carries the post-translational modification N6-malonyllysine; alternate. Serine 246 is subject to Phosphoserine. NAD(+) is bound at residue methionine 251. N6-succinyllysine is present on lysine 269. N6-acetyllysine; alternate is present on residues lysine 296, lysine 301, lysine 307, lysine 314, and lysine 324. An N6-succinyllysine; alternate mark is found at lysine 296, lysine 301, lysine 307, lysine 314, and lysine 324. Lysine 307 bears the N6-malonyllysine; alternate mark. Serine 326 carries the post-translational modification Phosphoserine. Residues lysine 328, lysine 329, and lysine 335 each carry the N6-acetyllysine; alternate modification. Residue lysine 328 is modified to N6-succinyllysine; alternate. Lysine 329 carries the post-translational modification N6-malonyllysine; alternate. An N6-succinyllysine; alternate modification is found at lysine 335.

This sequence belongs to the LDH/MDH superfamily. MDH type 1 family. Homodimer. In terms of processing, acetylation is enhanced after treatment either with trichostin A (TSA) or with nicotinamide (NAM) with the appearance of tri- and tetraacetylations. Glucose also increases acetylation. Ubiquitously expressed. Highly expressed in skeletal muscle and heart. Also expressed in liver, ileum, colon, kidney and adipose tissue, and at very low levels in lung, pancreas, stomach and spleen.

Its subcellular location is the mitochondrion matrix. It catalyses the reaction (S)-malate + NAD(+) = oxaloacetate + NADH + H(+). Enzyme activity is enhanced by acetylation. The protein is Malate dehydrogenase, mitochondrial of Felis catus (Cat).